Consider the following 391-residue polypeptide: Na(+)/H(+) antiporter NhaA (391 aa).

Transmembrane regions (helical) follow at residues 9-29 (FQLE…ALII), 36-56 (YLYS…LNIA), 59-79 (LLLW…GLEV), 95-115 (ILPA…YWFI), 123-143 (VAGW…VLAL), 154-174 (LFLM…IALF), 177-197 (GTLS…LIAM), 213-235 (LILW…ALAL), 259-279 (WVAY…SLAG), 293-313 (IAVG…WLAV), 329-349 (ILGV…VGSL), and 364-384 (MGIL…TAMA).

It belongs to the NhaA Na(+)/H(+) (TC 2.A.33) antiporter family.

It is found in the cell inner membrane. The catalysed reaction is Na(+)(in) + 2 H(+)(out) = Na(+)(out) + 2 H(+)(in). Its function is as follows. Na(+)/H(+) antiporter that extrudes sodium in exchange for external protons. The polypeptide is Na(+)/H(+) antiporter NhaA (Pseudomonas putida (strain GB-1)).